The following is a 289-amino-acid chain: Kinetochore-associated protein MTW1 (289 aa).

Residues 105–147 (RLENQKDLVIVDENELKKSEEKLREKVNDVELAFKKNEMLLKR) are a coiled coil.

It belongs to the mis12 family. Component of the MIND kinetochore complex, which is composed of at least MTW1, NNF1, NSL1 and DSN1.

The protein localises to the chromosome. It localises to the centromere. The protein resides in the kinetochore. Its subcellular location is the cytoplasm. It is found in the cytoskeleton. The protein localises to the spindle pole. Functionally, acts as an essential component of the kinetochore MIND complex, which is required for the spindle checkpoint and kinetochore integrity. MIND plays a role in establishing a bipolar spindle-kinetochore interaction by joining kinetochore subunits contacting DNA to those contacting microtubules. The polypeptide is Kinetochore-associated protein MTW1 (MTW1) (Saccharomyces cerevisiae (strain ATCC 204508 / S288c) (Baker's yeast)).